Consider the following 291-residue polypeptide: MSLLDWFADRRKTAPALRPTPEPDEGDGLWSKCPECGEVVYRKDLIANASVCASCGYHHRIHSEERLRILLDPGSFIPVDGELSPTDPLAFKDRRAYADRLRDSQRQTGLRDAVVCGTGTIEGQGIALAVMDFRFMGGSMGSVVGEKITRLIETATEQQLPVLVVCASGGARMQEGMLSLMQMAKISGALERHRSRKLLYIPLLTHPTTGGVTASFAMLGDLILAEPKALIGFAGRRVIEQTLREKLPDNFQTAEYLQDHGFVDAIIPRTQLRSRLASLLQMHQQPAAVSA.

The region spanning 29–291 is the CoA carboxyltransferase N-terminal domain; the sequence is LWSKCPECGE…MHQQPAAVSA (263 aa). The Zn(2+) site is built by cysteine 33, cysteine 36, cysteine 52, and cysteine 55. The C4-type zinc-finger motif lies at 33–55; that stretch reads CPECGEVVYRKDLIANASVCASC.

This sequence belongs to the AccD/PCCB family. In terms of assembly, acetyl-CoA carboxylase is a heterohexamer composed of biotin carboxyl carrier protein (AccB), biotin carboxylase (AccC) and two subunits each of ACCase subunit alpha (AccA) and ACCase subunit beta (AccD). Zn(2+) serves as cofactor.

The protein resides in the cytoplasm. The enzyme catalyses N(6)-carboxybiotinyl-L-lysyl-[protein] + acetyl-CoA = N(6)-biotinyl-L-lysyl-[protein] + malonyl-CoA. It participates in lipid metabolism; malonyl-CoA biosynthesis; malonyl-CoA from acetyl-CoA: step 1/1. Functionally, component of the acetyl coenzyme A carboxylase (ACC) complex. Biotin carboxylase (BC) catalyzes the carboxylation of biotin on its carrier protein (BCCP) and then the CO(2) group is transferred by the transcarboxylase to acetyl-CoA to form malonyl-CoA. This Synechococcus sp. (strain RCC307) protein is Acetyl-coenzyme A carboxylase carboxyl transferase subunit beta.